The following is a 292-amino-acid chain: Protein CHLOROPLAST ENHANCING STRESS TOLERANCE, chloroplastic (292 aa).

Residues 1-15 (MALLSPPSPPPPLPP) are compositionally biased toward pro residues. The transit peptide at 1 to 67 (MALLSPPSPP…RSSRRRRRVA (67 aa)) directs the protein to the chloroplast. Disordered regions lie at residues 1–119 (MALL…DLED) and 206–225 (MEAP…KATD). Low complexity-rich tracts occupy residues 49 to 58 (STANARAYSR) and 94 to 107 (ASSD…ASSA). Residues 267–287 (ALYLLTAFPVIIGISVVLILF) form a helical membrane-spanning segment.

Belongs to the Y3IP1/CEST family.

Its subcellular location is the plastid. The protein localises to the chloroplast thylakoid membrane. Functionally, involved in light-induced chloroplast development and growth. Involved in the plant response to abiotic and photooxidative stresses. May be involved in the suppression of photooxidative damage. This chain is Protein CHLOROPLAST ENHANCING STRESS TOLERANCE, chloroplastic, found in Oryza sativa subsp. indica (Rice).